We begin with the raw amino-acid sequence, 360 residues long: MAQLSLQHIQKIYDNQVHVVKDFNLEIADKEFIVFVGPSGCGKSTTLRMIAGLEEISGGDLLIDGKRMNDVPAKARNIAMVFQNYALYPHMTVYDNMAFGLKMQKIAKEVIDERVNWAAQILGLREYLKRKPGALSGGQRQRVALGRAIVREAGVFLMDEPLSNLDAKLRVQMRAEISKLHQKLNTTMIYVTHDQTEAMTMATRIVIMKDGIVQQVGAPKTVYNQPANMFVSGFIGSPAMNFIRGTIDGDKFVTETLKLTIPEEKLAVLKTQESLHKPIVMGIRPEDIHPDAQEENNISAKISVAELTGAEFMLYTTVGGHELVVRAGALNDYHAGENITIHFDMTKCHFFDAETEIAIR.

The region spanning 4 to 235 (LSLQHIQKIY…PANMFVSGFI (232 aa)) is the ABC transporter domain. 37–44 (GPSGCGKS) provides a ligand contact to ATP.

The protein belongs to the ABC transporter superfamily.

This is an uncharacterized protein from Escherichia coli (strain K12).